The sequence spans 414 residues: Enterobactin exporter EntS (414 aa).

Topologically, residues 1-21 (MNRQSWLLNLSLLKTHPAFRA) are cytoplasmic. A helical membrane pass occupies residues 22–42 (VFLARFISIVSLGLLGVAVPV). Residues 43–55 (QIQMMTHSTWQVG) lie on the Periplasmic side of the membrane. Residues 56 to 76 (LSVTLTGGAMFIGLMVGGVLA) form a helical membrane-spanning segment. Topologically, residues 77 to 83 (DRYERKK) are cytoplasmic. A helical transmembrane segment spans residues 84–104 (VILLARGTCGIGFIGLCVNAL). Residues 105–109 (LPEPS) are Periplasmic-facing. A helical membrane pass occupies residues 110–130 (LLAIYLLGLWDGFFASLGVTA). Residues 131-156 (LLAATPALVGRENLMQAGAITMLTVR) lie on the Cytoplasmic side of the membrane. A helical membrane pass occupies residues 157 to 177 (LGSVISPMLGGILLASGGVAW). A topological domain (periplasmic) is located at residue N178. The chain crosses the membrane as a helical span at residues 179–199 (YGLAAAGTFITLLPLLTLPRL). The Cytoplasmic portion of the chain corresponds to 200-218 (PVPPQPRENPFLALLAAFR). A helical transmembrane segment spans residues 219 to 239 (FLLACPLIGGIALLGGLVTMA). The Periplasmic portion of the chain corresponds to 240–256 (SAVRVLYPALAMSWQMS). A helical transmembrane segment spans residues 257–277 (AAQIGLLYAAIPLGAAIGALT). Over 278 to 287 (SGQLAHSVRP) the chain is Cytoplasmic. The helical transmembrane segment at 288–307 (GLIMLVSTVGSFLAVGLFAI) threads the bilayer. Residues 308–313 (MPVWIA) lie on the Periplasmic side of the membrane. The helical transmembrane segment at 314–336 (GVICLALFGWLSAISSLLQYTLL) threads the bilayer. Residues 337 to 356 (QTQTPENMLGRMNGLWTAQN) lie on the Cytoplasmic side of the membrane. Residues 357-377 (VTGDAIGAALLGGLGAMMTPV) traverse the membrane as a helical segment. Position 378 (A378) is a topological domain, periplasmic. The helical transmembrane segment at 379-399 (SASVSGFGLVIIGLLLLLVLG) threads the bilayer. At 400–414 (ELRRFRQTSPVSDAG) the chain is on the cytoplasmic side.

It belongs to the major facilitator superfamily. EntS (TC 2.A.1.38) family.

It is found in the cell inner membrane. Component of an export pathway for enterobactin. The protein is Enterobactin exporter EntS of Salmonella paratyphi A (strain ATCC 9150 / SARB42).